The chain runs to 77 residues: Pollen allergen Amb p 5a (77 aa).

An N-terminal signal peptide occupies residues 1 to 22 (MNNEKNVSFEFIGSTDEVDEIK). Disulfide bonds link C26/C61, C33/C48, C40/C54, and C41/C65.

The chain is Pollen allergen Amb p 5a from Ambrosia psilostachya (Western ragweed).